We begin with the raw amino-acid sequence, 505 residues long: Phosphoglycerate kinase A (505 aa).

The (2R)-3-phosphoglycerate site is built by Val-32, Asp-33, Phe-34, Asn-35, Arg-48, Ser-70, His-71, Gly-73, Arg-74, Arg-224, His-260, and Arg-261. ADP-binding residues include Gly-306 and Ala-307. Gly-306 provides a ligand contact to CDP. 2 residues coordinate AMP: Ala-307 and Lys-308. An ATP-binding site is contributed by Ala-307. Ala-307 serves as a coordination point for Mg(2+). Position 308 (Lys-308) interacts with (2R)-3-phosphoglycerate. Residue Glu-311 coordinates CDP. Glu-311 provides a ligand contact to Mg(2+). ADP contacts are provided by Lys-312 and Gly-330. Lys-312 contacts AMP. Residue Lys-312 coordinates ATP. A CDP-binding site is contributed by Gly-330. AMP-binding residues include Ala-331 and Ala-403. ATP contacts are provided by Ala-331 and Ala-403. ADP-binding residues include Ala-403 and Asn-427. CDP-binding residues include Gly-428 and Phe-433. ADP contacts are provided by Phe-433, Glu-434, Glu-466, and Ser-467. Residue Glu-434 coordinates AMP. ATP is bound by residues Glu-434, Glu-466, and Ser-467. Residue Glu-466 coordinates Mg(2+).

This sequence belongs to the phosphoglycerate kinase family. As to quaternary structure, monomer. Requires Mg(2+) as cofactor.

It catalyses the reaction (2R)-3-phosphoglycerate + ATP = (2R)-3-phospho-glyceroyl phosphate + ADP. The protein operates within carbohydrate degradation; glycolysis; pyruvate from D-glyceraldehyde 3-phosphate: step 2/5. This chain is Phosphoglycerate kinase A, found in Trypanosoma brucei brucei.